Here is a 356-residue protein sequence, read N- to C-terminus: 5-formaminoimidazole-4-carboxamide-1-(beta)-D-ribofuranosyl 5'-monophosphate synthetase 1 (356 aa).

5-amino-1-(5-phospho-beta-D-ribosyl)imidazole-4-carboxamide contacts are provided by His27 and Ser94. The region spanning 101 to 333 is the ATP-grasp domain; it reads TENFAEMAVP…YADLIQEDLS (233 aa). ATP is bound by residues 145–196 and Glu226; that span reads PRDI…TRYY. Asn255 is a 5-amino-1-(5-phospho-beta-D-ribosyl)imidazole-4-carboxamide binding site. Mg(2+)-binding residues include Glu293 and Glu306.

It belongs to the phosphohexose mutase family. Mg(2+) serves as cofactor. It depends on Mn(2+) as a cofactor.

It carries out the reaction 5-amino-1-(5-phospho-beta-D-ribosyl)imidazole-4-carboxamide + formate + ATP = 5-formamido-1-(5-phospho-D-ribosyl)imidazole-4-carboxamide + ADP + phosphate. It functions in the pathway purine metabolism; IMP biosynthesis via de novo pathway; 5-formamido-1-(5-phospho-D-ribosyl)imidazole-4-carboxamide from 5-amino-1-(5-phospho-D-ribosyl)imidazole-4-carboxamide (formate route): step 1/1. Its function is as follows. Catalyzes the ATP- and formate-dependent formylation of 5-aminoimidazole-4-carboxamide-1-beta-d-ribofuranosyl 5'-monophosphate (AICAR) to 5-formaminoimidazole-4-carboxamide-1-beta-d-ribofuranosyl 5'-monophosphate (FAICAR) in the absence of folates. The chain is 5-formaminoimidazole-4-carboxamide-1-(beta)-D-ribofuranosyl 5'-monophosphate synthetase 1 from Methanosarcina mazei (strain ATCC BAA-159 / DSM 3647 / Goe1 / Go1 / JCM 11833 / OCM 88) (Methanosarcina frisia).